The chain runs to 463 residues: Serine/threonine-protein kinase sgk-1 (463 aa).

The 258-residue stretch at 135 to 392 (FDYLTTIGKG…FRDIRDHPFF (258 aa)) folds into the Protein kinase domain. ATP-binding positions include 141-149 (IGKGSFGRV) and Lys-164. The Proton acceptor role is filled by Asp-259. An AGC-kinase C-terminal domain is found at 393-463 (LPVDWDKLLN…TFVDTNRVLV (71 aa)).

It belongs to the protein kinase superfamily. AGC Ser/Thr protein kinase family. As to quaternary structure, interacts with pdk-1, akt-1, akt-2 and daf-16. Part of a complex containing sgk-1, akt-1 and akt-2. Interacts with let-92 phosphatase regulatory subunit pptr-1. It depends on Mg(2+) as a cofactor. In terms of tissue distribution, expressed in late embryos just before hatching. At postembryonic stages, expressed in sensory and motor neurons and in the intestine. Highly expressed in the intestine and head and tail neurons.

Its subcellular location is the cytoplasm. The protein resides in the nucleus. It localises to the apical cell membrane. The enzyme catalyses L-seryl-[protein] + ATP = O-phospho-L-seryl-[protein] + ADP + H(+). It carries out the reaction L-threonyl-[protein] + ATP = O-phospho-L-threonyl-[protein] + ADP + H(+). Phosphorylated and activated by pdk-1. In terms of biological role, acts downstream of PI3 kinase age-1 and kinase pdk-1 in the daf-2/insulin receptor-like transduction pathway. Essential role in regulating development, stress response, and longevity. Phosphorylates Forkhead-related daf-16 and the longevity-promoting skn-1 transcription factors, which inhibits their entry into the nucleus and antagonizes their function. Promotes the cytoplasmic localization of the transcription factor pqm-1. Plays a role in the intracellular trafficking of proteins such as mig-14 to the cell membrane, and this may be through positively regulating ceramide synthesis. Acts downstream of rict-1 to regulate fat storage, size, development and vitellogenesis. Downstream of age-1 and together with akt-1/2, promotes cell survival during embryonic development. Plays a role in maintaining the gonadal basement membrane through antagonizing akt-1 activity. Does not appear to play a role in immune function. The sequence is that of Serine/threonine-protein kinase sgk-1 from Caenorhabditis elegans.